The primary structure comprises 237 residues: tRNA (guanine-N(1)-)-methyltransferase (237 aa).

Residues G112 and 132-137 (IGDFVL) contribute to the S-adenosyl-L-methionine site.

This sequence belongs to the RNA methyltransferase TrmD family. Homodimer.

Its subcellular location is the cytoplasm. It catalyses the reaction guanosine(37) in tRNA + S-adenosyl-L-methionine = N(1)-methylguanosine(37) in tRNA + S-adenosyl-L-homocysteine + H(+). In terms of biological role, specifically methylates guanosine-37 in various tRNAs. The protein is tRNA (guanine-N(1)-)-methyltransferase of Thermosynechococcus vestitus (strain NIES-2133 / IAM M-273 / BP-1).